The following is a 124-amino-acid chain: TP53-target gene 3 protein (124 aa).

Residues 1–11 (MRASPCISQPA) show a composition bias toward polar residues. The disordered stretch occupies residues 1 to 42 (MRASPCISQPAASWHPRPSALRPTAGSGPDTRTPGTVEDGSA).

In terms of tissue distribution, strongly expressed in testis. Weakly expressed in heart, placenta and skeletal muscle.

The protein localises to the cytoplasm. It is found in the nucleus. Functionally, may play a significant role in p53/TP53-mediating signaling pathway. The polypeptide is TP53-target gene 3 protein (Homo sapiens (Human)).